A 319-amino-acid chain; its full sequence is Beta-ketoacyl-[acyl-carrier-protein] synthase III (319 aa).

Active-site residues include cysteine 115 and histidine 246. The interval 247 to 251 is ACP-binding; that stretch reads QANLR. The active site involves asparagine 276.

The protein belongs to the thiolase-like superfamily. FabH family. As to quaternary structure, homodimer.

Its subcellular location is the cytoplasm. The catalysed reaction is malonyl-[ACP] + acetyl-CoA + H(+) = 3-oxobutanoyl-[ACP] + CO2 + CoA. Its pathway is lipid metabolism; fatty acid biosynthesis. Its function is as follows. Catalyzes the condensation reaction of fatty acid synthesis by the addition to an acyl acceptor of two carbons from malonyl-ACP. Catalyzes the first condensation reaction which initiates fatty acid synthesis and may therefore play a role in governing the total rate of fatty acid production. Possesses both acetoacetyl-ACP synthase and acetyl transacylase activities. Its substrate specificity determines the biosynthesis of branched-chain and/or straight-chain of fatty acids. The sequence is that of Beta-ketoacyl-[acyl-carrier-protein] synthase III from Coxiella burnetii (strain Dugway 5J108-111).